The sequence spans 536 residues: CTP synthase (536 aa).

The segment at 1 to 267 (MSKFVFVTGG…CKETLKYLDL (267 aa)) is amidoligase domain. Ser-13 serves as a coordination point for CTP. Residue Ser-13 coordinates UTP. ATP contacts are provided by residues 14 to 19 (SIGKGI) and Asp-71. Positions 71 and 141 each coordinate Mg(2+). Residues 148–150 (DIE), 188–193 (KTKPTQ), and Lys-224 contribute to the CTP site. UTP-binding positions include 188–193 (KTKPTQ) and Lys-224. One can recognise a Glutamine amidotransferase type-1 domain in the interval 292–534 (KVALVGKYIE…IKASQDKLTQ (243 aa)). Gly-354 is a binding site for L-glutamine. Cys-381 (nucleophile; for glutamine hydrolysis) is an active-site residue. L-glutamine is bound by residues 382 to 385 (LGMQ), Glu-405, and Arg-462. Catalysis depends on residues His-507 and Glu-509.

Belongs to the CTP synthase family. Homotetramer.

It catalyses the reaction UTP + L-glutamine + ATP + H2O = CTP + L-glutamate + ADP + phosphate + 2 H(+). The catalysed reaction is L-glutamine + H2O = L-glutamate + NH4(+). The enzyme catalyses UTP + NH4(+) + ATP = CTP + ADP + phosphate + 2 H(+). It participates in pyrimidine metabolism; CTP biosynthesis via de novo pathway; CTP from UDP: step 2/2. Allosterically activated by GTP, when glutamine is the substrate; GTP has no effect on the reaction when ammonia is the substrate. The allosteric effector GTP functions by stabilizing the protein conformation that binds the tetrahedral intermediate(s) formed during glutamine hydrolysis. Inhibited by the product CTP, via allosteric rather than competitive inhibition. Catalyzes the ATP-dependent amination of UTP to CTP with either L-glutamine or ammonia as the source of nitrogen. Regulates intracellular CTP levels through interactions with the four ribonucleotide triphosphates. This Prochlorococcus marinus (strain AS9601) protein is CTP synthase.